A 164-amino-acid chain; its full sequence is UPF0304 protein YfbU (164 aa).

It belongs to the UPF0304 family.

The polypeptide is UPF0304 protein YfbU (Shigella flexneri serotype 5b (strain 8401)).